A 401-amino-acid polypeptide reads, in one-letter code: 1-deoxy-D-xylulose 5-phosphate reductoisomerase (401 aa).

7 residues coordinate NADPH: Thr11, Gly12, Ser13, Ile14, Arg38, Asn39, and Asn125. Lys126 serves as a coordination point for 1-deoxy-D-xylulose 5-phosphate. NADPH is bound at residue Glu127. Asp151 lines the Mn(2+) pocket. Ser152, Glu153, Ser179, and His202 together coordinate 1-deoxy-D-xylulose 5-phosphate. Glu153 is a Mn(2+) binding site. Residue Gly208 coordinates NADPH. 1-deoxy-D-xylulose 5-phosphate is bound by residues Ser215, Asn220, Lys221, and Glu224. A Mn(2+)-binding site is contributed by Glu224.

This sequence belongs to the DXR family. Mg(2+) serves as cofactor. The cofactor is Mn(2+).

The enzyme catalyses 2-C-methyl-D-erythritol 4-phosphate + NADP(+) = 1-deoxy-D-xylulose 5-phosphate + NADPH + H(+). It participates in isoprenoid biosynthesis; isopentenyl diphosphate biosynthesis via DXP pathway; isopentenyl diphosphate from 1-deoxy-D-xylulose 5-phosphate: step 1/6. Its function is as follows. Catalyzes the NADPH-dependent rearrangement and reduction of 1-deoxy-D-xylulose-5-phosphate (DXP) to 2-C-methyl-D-erythritol 4-phosphate (MEP). This chain is 1-deoxy-D-xylulose 5-phosphate reductoisomerase, found in Paraburkholderia xenovorans (strain LB400).